Consider the following 264-residue polypeptide: Apolipoprotein A-I (264 aa).

The first 18 residues, 1 to 18 (MKAVVLAVAVLFLTGSQA), serve as a signal peptide directing secretion. Repeat copies occupy residues 67 to 88 (LNLL…EQLG) and 89 to 110 (HVSQ…EEMN). A 10 X approximate tandem repeats region spans residues 67–264 (LNLLENWDTL…DQITKHVTTQ (198 aa)). A Methionine sulfoxide modification is found at Met109. The stretch at 111 to 121 (KDLEKVKKKVQ) is one 3; half-length repeat. 3 consecutive repeat copies span residues 122–143 (PFLD…HKVE), 144–165 (PLSL…EKLG), and 166–187 (PLGK…SHLR). The stretch at 188-207 (TYTEEMGQILAERLGAIKES) is one 7; truncated repeat. Methionine sulfoxide is present on Met193. Repeat 8 spans residues 208–229 (TSLAEYQTKASEHLRTFSKKAK). The stretch at 230 to 240 (PILEDLRQGLL) is one 9; half-length repeat. Repeat unit 10 spans residues 241–264 (PVAENFKTNIKNTFDQITKHVTTQ).

The protein belongs to the apolipoprotein A1/A4/E family. Homodimer. Interacts with APOA1BP and CLU. Component of a sperm activating protein complex (SPAP), consisting of APOA1, an immunoglobulin heavy chain, an immunoglobulin light chain and albumin. Interacts with NDRG1. Interacts with SCGB3A2. Interacts with NAXE and YJEFN3. Glycosylated. In terms of processing, palmitoylated. Post-translationally, phosphorylation sites are present in the extracellular medium.

The protein resides in the secreted. Participates in the reverse transport of cholesterol from tissues to the liver for excretion by promoting cholesterol efflux from tissues and by acting as a cofactor for the lecithin cholesterol acyltransferase (LCAT). As part of the SPAP complex, activates spermatozoa motility. This chain is Apolipoprotein A-I (Apoa1), found in Fukomys damarensis (Damaraland mole rat).